We begin with the raw amino-acid sequence, 397 residues long: Tyrosine aminotransferase (397 aa).

Glycine 34, tyrosine 66, tryptophan 131, and asparagine 184 together coordinate substrate. N6-(pyridoxal phosphate)lysine is present on lysine 247. Arginine 375 lines the substrate pocket.

Belongs to the class-I pyridoxal-phosphate-dependent aminotransferase family. Homodimer. Requires pyridoxal 5'-phosphate as cofactor.

It catalyses the reaction L-tyrosine + 2-oxoglutarate = 3-(4-hydroxyphenyl)pyruvate + L-glutamate. The catalysed reaction is 4-methylsulfanyl-2-oxobutanoate + L-tyrosine = 3-(4-hydroxyphenyl)pyruvate + L-methionine. It carries out the reaction an aromatic L-alpha-amino acid + 2-oxoglutarate = an aromatic oxo-acid + L-glutamate. The enzyme catalyses L-aspartate + 2-oxoglutarate = oxaloacetate + L-glutamate. It participates in amino-acid biosynthesis; L-methionine biosynthesis via salvage pathway; L-methionine from S-methyl-5-thio-alpha-D-ribose 1-phosphate: step 6/6. Inhibited by malate and nitrotyrosine by approximately 20% at the higher concentration. At 100 uM, canaline and carboxymethoxylamine inhibit aminotransferase activity by 35 and 70%, respectively. Addition of 1.0 mM carboxymethoxylamine lead to a complete inhibition of the aminotransferase activity. Functionally, catalyzes the formation of methionine from 2-keto-4-methylthiobutyrate (KMTB) primarily using aromatic amino acids (tyrosine, phenylalanine and tryptophan) or glutamate as the amino donors. Histidine, leucine, asparagine, or arginine are also functional amino donors but to a lesser extent. Can also use alpha-ketoglutarate, oxaloacetate and pyruvate as the amino acceptors. The protein is Tyrosine aminotransferase (tyrB) of Klebsiella pneumoniae.